The sequence spans 122 residues: UPF0344 protein BcerKBAB4_1054 (122 aa).

4 helical membrane-spanning segments follow: residues 6 to 26 (ITAW…YSAG), 38 to 58 (LMYI…VKTA), 65 to 85 (WYGM…MVLV), and 92 to 112 (PTGA…YLGL).

The protein belongs to the UPF0344 family.

Its subcellular location is the cell membrane. The polypeptide is UPF0344 protein BcerKBAB4_1054 (Bacillus mycoides (strain KBAB4) (Bacillus weihenstephanensis)).